The chain runs to 221 residues: Translation initiation factor 6 (221 aa).

This sequence belongs to the eIF-6 family.

Binds to the 50S ribosomal subunit and prevents its association with the 30S ribosomal subunit to form the 70S initiation complex. This is Translation initiation factor 6 from Halorubrum lacusprofundi (strain ATCC 49239 / DSM 5036 / JCM 8891 / ACAM 34).